Consider the following 291-residue polypeptide: Beta-lactamase CTX-M-14 (291 aa).

The first 28 residues, 1–28 (MVTKRVQRMMFAAAACIPLLLGSAPLYA), serve as a signal peptide directing secretion. Catalysis depends on S73, which acts as the Nucleophile; acyl-ester intermediate. Residues K76, S133, E169, and S240 each coordinate a beta-lactam.

This sequence belongs to the class-A beta-lactamase family. As to quaternary structure, monomer.

The protein localises to the secreted. It carries out the reaction a beta-lactam + H2O = a substituted beta-amino acid. Its activity is regulated as follows. Inhibited by the beta-lactamase-blocking agents clavulanic acid, tazobactam and sulbactam. Extended-spectrum beta-lactamase (ESBL) which confers resistance to penicillins, as well as first, second, and third-generation cephalosporins. Has cefotaxime-hydrolyzing activity. This chain is Beta-lactamase CTX-M-14, found in Escherichia coli.